Here is a 197-residue protein sequence, read N- to C-terminus: Holliday junction branch migration complex subunit RuvA (197 aa).

The domain I stretch occupies residues 1–63 (MIEFIRGYVD…EDVLALYGFH (63 aa)). Residues 64–142 (TRQERMLFAK…AIVPDAFPNL (79 aa)) form a domain II region. Positions 143 to 149 (FTEPLEE) are flexible linker. The segment at 149-197 (ETNALSEAIEALKALGYADKEIQKVVPMLRQERLSTEGYIKLALQKLLK) is domain III.

The protein belongs to the RuvA family. In terms of assembly, homotetramer. Forms an RuvA(8)-RuvB(12)-Holliday junction (HJ) complex. HJ DNA is sandwiched between 2 RuvA tetramers; dsDNA enters through RuvA and exits via RuvB. An RuvB hexamer assembles on each DNA strand where it exits the tetramer. Each RuvB hexamer is contacted by two RuvA subunits (via domain III) on 2 adjacent RuvB subunits; this complex drives branch migration. In the full resolvosome a probable DNA-RuvA(4)-RuvB(12)-RuvC(2) complex forms which resolves the HJ.

It localises to the cytoplasm. Its function is as follows. The RuvA-RuvB-RuvC complex processes Holliday junction (HJ) DNA during genetic recombination and DNA repair, while the RuvA-RuvB complex plays an important role in the rescue of blocked DNA replication forks via replication fork reversal (RFR). RuvA specifically binds to HJ cruciform DNA, conferring on it an open structure. The RuvB hexamer acts as an ATP-dependent pump, pulling dsDNA into and through the RuvAB complex. HJ branch migration allows RuvC to scan DNA until it finds its consensus sequence, where it cleaves and resolves the cruciform DNA. The protein is Holliday junction branch migration complex subunit RuvA of Anoxybacillus flavithermus (strain DSM 21510 / WK1).